The following is an 88-amino-acid chain: uncharacterized protein (88 aa).

This is an uncharacterized protein from Lymantria dispar multicapsid nuclear polyhedrosis virus (LdMNPV).